Reading from the N-terminus, the 266-residue chain is Early E1A protein (266 aa).

The segment at 39 to 47 (PSLYELYDL) is interaction with RB1 in competition with E2F1. The segment at 75–145 (EGLFLPEPPV…AAAAADRERE (71 aa)) is interaction with UBE2I. Positions 98-102 (PQLHP) match the PXLXP motif, interaction with host ZMYND11 motif. The LXCXE motif, interaction with host RB1 and TMEM173/STING motif lies at 107-111 (LLCYE). A zinc finger lies at 159–179 (CKSCEHHRNSTGNTDLMCSLC). A disordered region spans residues 195–226 (NEPEPNSTLDGDERPSPPKLGSAVPEGVIKPV). Positions 255-259 (PVDLS) match the PXDLS motif, CTBP-binding motif. The Nuclear localization signal signature appears at 261 to 265 (KRPRC).

The protein belongs to the adenoviridae E1A protein family. Interacts with host UBE2I; this interaction interferes with polySUMOylation. Interacts with host RB1; this interaction induces the aberrant dissociation of RB1-E2F1 complex thereby disrupting the activity of RB1 and activating E2F1-regulated genes. Interacts with host ATF7; the interaction enhances ATF7-mediated viral transactivation activity which requires the zinc binding domains of both proteins. Isoform early E1A 32 kDa protein and isoform early E1A 26 kDa protein interact (via N-terminus) with CUL1 and E3 ubiquitin ligase RBX1; these interactions inhibit RBX1-CUL1-dependent elongation reaction of ubiquitin chains and attenuate ubiquitination of SCF(FBXW7) target proteins. Interacts (via PXLXP motif) with host ZMYND11/BS69 (via MYND-type zinc finger); this interaction inhibits E1A mediated transactivation. Interacts with host EP300; this interaction stimulates the acetylation of RB1 by recruiting EP300 and RB1 into a multimeric-protein complex. Interacts with host CTBP1 and CTBP2; this interaction seems to potentiate viral replication. Interacts with host DCAF7. Interacts with host DYRK1A. Interacts with host KPNA4; this interaction allows E1A import into the host nucleus. Interacts with host EP400; this interaction stabilizes MYC. Interacts with host TBP protein; this interaction probably disrupts the TBP-TATA complex. Interacts (via LXCXE motif) with host TMEM173/STING; this interaction impairs the ability of TMEM173/STING to sense cytosolic DNA and promote the production of type I interferon (IFN-alpha and IFN-beta). Interacts (via C-terminus) with host ZBED1/hDREF (via C-terminus); the interaction is direct.

It localises to the host nucleus. Plays a role in viral genome replication by driving entry of quiescent cells into the cell cycle. Stimulation of progression from G1 to S phase allows the virus to efficiently use the cellular DNA replicating machinery to achieve viral genome replication. E1A protein has both transforming and trans-activating activities. Induces the disassembly of the E2F1 transcription factor from RB1 by direct competition for the same binding site on RB1, with subsequent transcriptional activation of E2F1-regulated S-phase genes and of the E2 region of the adenoviral genome. Release of E2F1 leads to the ARF-mediated inhibition of MDM2 and causes TP53/p53 to accumulate because it is not targeted for degradation by MDM2-mediated ubiquitination anymore. This increase in TP53, in turn, would arrest the cell proliferation and direct its death but this effect is counteracted by the viral protein E1B-55K. Inactivation of the ability of RB1 to arrest the cell cycle is critical for cellular transformation, uncontrolled cellular growth and proliferation induced by viral infection. Interaction with RBX1 and CUL1 inhibits ubiquitination of the proteins targeted by SCF(FBXW7) ubiquitin ligase complex, and may be linked to unregulated host cell proliferation. The tumorigenesis-restraining activity of E1A may be related to the disruption of the host CtBP-CtIP complex through the CtBP binding motif. Interaction with host TMEM173/STING impairs the ability of TMEM173/STING to sense cytosolic DNA and promote the production of type I interferon (IFN-alpha and IFN-beta). Promotes the sumoylation of host ZBED1/hDREF with SUMO1. The chain is Early E1A protein from Homo sapiens (Human).